Here is a 1755-residue protein sequence, read N- to C-terminus: Transposon Ty1-ER1 Gag-Pol polyprotein (1755 aa).

Composition is skewed to polar residues over residues 1 to 23 (MESQ…SVTS), 48 to 60 (TKAN…TPAS), and 127 to 152 (QSQF…GNTF). Disordered regions lie at residues 1–93 (MESQ…MMTQ), 126–174 (PQSQ…PPPM), and 352–421 (GSRN…SKST). Residues 153–165 (TDSSSADSDMTST) show a composition bias toward low complexity. Residues 299–401 (NNGIHINNKV…NSKSKTARAH (103 aa)) form an RNA-binding region. Over residues 402 to 418 (NVSTSNNSPSTDNDSIS) the composition is skewed to low complexity. Serine 416 bears the Phosphoserine mark. The active-site For protease activity; shared with dimeric partner is aspartate 461. Residues 583–640 (NVHTSESTRKYPYPFIHRMLAHANAQTIRYSLKNNTITYFNESDVDWSSAIDYQCPDC) are integrase-type zinc finger-like. Residues 660-835 (NSYEPFQYLH…AGLDISTLLP (176 aa)) enclose the Integrase catalytic domain. Aspartate 671 and aspartate 736 together coordinate Mg(2+). Disordered regions lie at residues 956–1087 (SKAV…ETEK), 1092–1111 (RSPS…NIVP), and 1130–1171 (DLPL…DSNA). The span at 960-969 (SPTDSTPPST) shows a compositional bias: low complexity. A compositionally biased stretch (polar residues) spans 1005–1015 (STPQISNIEST). The span at 1038-1053 (ESSHASKSKDFRHSDS) shows a compositional bias: basic and acidic residues. Polar residues-rich tracts occupy residues 1054–1082 (YSEN…QISD) and 1101–1111 (PENNSSHNIVP). The short motif at 1178–1212 (KKRSLEDNETEIKVSRDTWNTKNMRSLEPPRSKKR) is the Bipartite nuclear localization signal element. Positions 1338-1476 (NNYYITQLDI…DILGLEIKYQ (139 aa)) constitute a Reverse transcriptase Ty1/copia-type domain. Residues aspartate 1346, aspartate 1427, aspartate 1428, aspartate 1610, glutamate 1652, and aspartate 1685 each contribute to the Mg(2+) site. The region spanning 1610–1752 (DASYGNQPYY…IKTFKLLTNK (143 aa)) is the RNase H Ty1/copia-type domain.

In terms of assembly, the capsid protein forms a homotrimer, from which the VLPs are assembled. The protease is a homodimer, whose active site consists of two apposed aspartic acid residues. Post-translationally, initially, virus-like particles (VLPs) are composed of the structural unprocessed proteins Gag and Gag-Pol, and also contain the host initiator methionine tRNA (tRNA(i)-Met) which serves as a primer for minus-strand DNA synthesis, and a dimer of genomic Ty RNA. Processing of the polyproteins occurs within the particle and proceeds by an ordered pathway, called maturation. First, the protease (PR) is released by autocatalytic cleavage of the Gag-Pol polyprotein yielding capsid protein p45 and a Pol-p154 precursor protein. This cleavage is a prerequisite for subsequent processing of Pol-p154 at the remaining sites to release the mature structural and catalytic proteins. Maturation takes place prior to the RT reaction and is required to produce transposition-competent VLPs.

Its subcellular location is the cytoplasm. It localises to the nucleus. It carries out the reaction DNA(n) + a 2'-deoxyribonucleoside 5'-triphosphate = DNA(n+1) + diphosphate. It catalyses the reaction Endonucleolytic cleavage to 5'-phosphomonoester.. Capsid protein (CA) is the structural component of the virus-like particle (VLP), forming the shell that encapsulates the retrotransposons dimeric RNA genome. The particles are assembled from trimer-clustered units and there are holes in the capsid shells that allow for the diffusion of macromolecules. CA also has nucleocapsid-like chaperone activity, promoting primer tRNA(i)-Met annealing to the multipartite primer-binding site (PBS), dimerization of Ty1 RNA and initiation of reverse transcription. In terms of biological role, the aspartyl protease (PR) mediates the proteolytic cleavages of the Gag and Gag-Pol polyproteins after assembly of the VLP. Its function is as follows. Reverse transcriptase/ribonuclease H (RT) is a multifunctional enzyme that catalyzes the conversion of the retro-elements RNA genome into dsDNA within the VLP. The enzyme displays a DNA polymerase activity that can copy either DNA or RNA templates, and a ribonuclease H (RNase H) activity that cleaves the RNA strand of RNA-DNA heteroduplexes during plus-strand synthesis and hydrolyzes RNA primers. The conversion leads to a linear dsDNA copy of the retrotransposon that includes long terminal repeats (LTRs) at both ends. Functionally, integrase (IN) targets the VLP to the nucleus, where a subparticle preintegration complex (PIC) containing at least integrase and the newly synthesized dsDNA copy of the retrotransposon must transit the nuclear membrane. Once in the nucleus, integrase performs the integration of the dsDNA into the host genome. This chain is Transposon Ty1-ER1 Gag-Pol polyprotein (TY1B-ER1), found in Saccharomyces cerevisiae (strain ATCC 204508 / S288c) (Baker's yeast).